The chain runs to 263 residues: Hydroxyethylthiazole kinase 1 (263 aa).

Methionine 42 provides a ligand contact to substrate. ATP contacts are provided by lysine 118 and threonine 164. Glycine 191 is a binding site for substrate.

The protein belongs to the Thz kinase family. The cofactor is Mg(2+).

The enzyme catalyses 5-(2-hydroxyethyl)-4-methylthiazole + ATP = 4-methyl-5-(2-phosphooxyethyl)-thiazole + ADP + H(+). The protein operates within cofactor biosynthesis; thiamine diphosphate biosynthesis; 4-methyl-5-(2-phosphoethyl)-thiazole from 5-(2-hydroxyethyl)-4-methylthiazole: step 1/1. Its function is as follows. Catalyzes the phosphorylation of the hydroxyl group of 4-methyl-5-beta-hydroxyethylthiazole (THZ). The sequence is that of Hydroxyethylthiazole kinase 1 from Clostridium botulinum (strain Langeland / NCTC 10281 / Type F).